Here is a 734-residue protein sequence, read N- to C-terminus: Photosystem I P700 chlorophyll a apoprotein A2 (734 aa).

8 helical membrane passes run 46–69 (IFASHFGHLAIIFLWTSGNLFHVA), 135–158 (LYAGALFLLVLAALCMFAGRLHLQ), 175–199 (LNHHLSGLFGLSSLAWCGHLIHVAI), 273–291 (IAHHHLAIAVIFIIAGHMY), 330–353 (LHFQLGLALACLGVLSSLTAQHLY), 369–395 (AALYTHHQYIAGFLMVGAFAHGAIFFV), 417–439 (AIISHLSWVSLFLGFHTLGLYVH), and 517–535 (FLVHHAIALGLHTTTLILV). [4Fe-4S] cluster is bound by residues Cys559 and Cys568. The next 2 helical transmembrane spans lie at 575-596 (AFYLGVFWMLNTIGWTTFYWHW) and 643-665 (LSVWAWMFLFAHLVWATGFMFLI). Positions 654, 662, and 670 each coordinate chlorophyll a. Residue Trp671 coordinates phylloquinone. Residues 707–727 (LVGLVHFSVGYVLTYAAFVIA) form a helical membrane-spanning segment.

The protein belongs to the PsaA/PsaB family. In terms of assembly, the PsaA/B heterodimer binds the P700 chlorophyll special pair and subsequent electron acceptors. PSI consists of a core antenna complex that captures photons, and an electron transfer chain that converts photonic excitation into a charge separation. The eukaryotic PSI reaction center is composed of at least 11 subunits. P700 is a chlorophyll a/chlorophyll a' dimer, A0 is one or more chlorophyll a, A1 is one or both phylloquinones and FX is a shared 4Fe-4S iron-sulfur center. is required as a cofactor.

It localises to the plastid. The protein resides in the chloroplast thylakoid membrane. It carries out the reaction reduced [plastocyanin] + hnu + oxidized [2Fe-2S]-[ferredoxin] = oxidized [plastocyanin] + reduced [2Fe-2S]-[ferredoxin]. Its function is as follows. PsaA and PsaB bind P700, the primary electron donor of photosystem I (PSI), as well as the electron acceptors A0, A1 and FX. PSI is a plastocyanin/cytochrome c6-ferredoxin oxidoreductase, converting photonic excitation into a charge separation, which transfers an electron from the donor P700 chlorophyll pair to the spectroscopically characterized acceptors A0, A1, FX, FA and FB in turn. Oxidized P700 is reduced on the lumenal side of the thylakoid membrane by plastocyanin or cytochrome c6. This Cyanidium caldarium (Red alga) protein is Photosystem I P700 chlorophyll a apoprotein A2.